The chain runs to 106 residues: Large ribosomal subunit protein uL24 (106 aa).

Belongs to the universal ribosomal protein uL24 family. Part of the 50S ribosomal subunit.

In terms of biological role, one of two assembly initiator proteins, it binds directly to the 5'-end of the 23S rRNA, where it nucleates assembly of the 50S subunit. Functionally, one of the proteins that surrounds the polypeptide exit tunnel on the outside of the subunit. The protein is Large ribosomal subunit protein uL24 of Bordetella petrii (strain ATCC BAA-461 / DSM 12804 / CCUG 43448).